The following is a 670-amino-acid chain: Probable potassium transport system protein Kup 1 (670 aa).

The next 13 membrane-spanning stretches (helical) occupy residues 14 to 34 (GAGF…SPLY), 58 to 78 (LSLI…WIAL), 101 to 121 (WLII…ALTP), 147 to 167 (LPIV…QRFG), 175 to 195 (FGPV…INLF), 196 to 216 (GDFS…LLSP), 220 to 240 (AGIF…ALYS), 252 to 272 (VSWP…GAWL), 294 to 314 (LIIF…QALI), 345 to 365 (LYIP…VVYF), 374 to 394 (AYGL…TVYL), 403 to 423 (VLVG…FAAS), and 427 to 447 (FMHG…VMAI).

It belongs to the HAK/KUP transporter (TC 2.A.72) family.

The protein localises to the cell membrane. It carries out the reaction K(+)(in) + H(+)(in) = K(+)(out) + H(+)(out). Its function is as follows. Transport of potassium into the cell. Likely operates as a K(+):H(+) symporter. The chain is Probable potassium transport system protein Kup 1 from Lactococcus lactis subsp. lactis (strain IL1403) (Streptococcus lactis).